The following is a 428-amino-acid chain: Beta-1,3-galactosyl-O-glycosyl-glycoprotein beta-1,6-N-acetylglucosaminyltransferase 4 (428 aa).

Residues M1–C12 lie on the Cytoplasmic side of the membrane. The chain crosses the membrane as a helical; Signal-anchor for type II membrane protein span at residues K13–L30. Residues K31–S428 lie on the Lumenal side of the membrane. N-linked (GlcNAc...) asparagine glycosylation occurs at N59. 4 disulfides stabilise this stretch: C60-C214, C148-C369, C169-C196, and C378-C410.

This sequence belongs to the glycosyltransferase 14 family.

Its subcellular location is the golgi apparatus membrane. The catalysed reaction is a 3-O-[beta-D-galactosyl-(1-&gt;3)-N-acetyl-alpha-D-galactosaminyl]-L-seryl-[protein] + UDP-N-acetyl-alpha-D-glucosamine = 3-O-{beta-D-galactosyl-(1-&gt;3)-[N-acetyl-beta-D-glucosaminyl-(1-&gt;6)]-N-acetyl-alpha-D-galactosaminyl}-L-seryl-[protein] + UDP + H(+). It carries out the reaction a 3-O-[beta-D-galactosyl-(1-&gt;3)-N-acetyl-alpha-D-galactosaminyl]-L-threonyl-[protein] + UDP-N-acetyl-alpha-D-glucosamine = a 3-O-{beta-D-galactosyl-(1-&gt;3)-[N-acetyl-beta-D-glucosaminyl-(1-&gt;6)]-N-acetyl-alpha-D-galactosaminyl}-L-threonyl-[protein] + UDP + H(+). It participates in protein modification; protein glycosylation. Its function is as follows. Glycosyltransferase that mediates core 2 O-glycan branching, an important step in mucin-type biosynthesis. In Danio rerio (Zebrafish), this protein is Beta-1,3-galactosyl-O-glycosyl-glycoprotein beta-1,6-N-acetylglucosaminyltransferase 4 (gcnt4).